Here is a 130-residue protein sequence, read N- to C-terminus: MAEKKILKKKVVKKSIAKGIVYISATFNNTMVTVTDEMGNAIAWSSAGALNFKGSKKSTPYAAQQAVEDALNKAKEHGIKEVGIKVQGPGSGRETAVKSIGAIEGIKVTFFKDITPLAHNGCRPPKRRRV.

This sequence belongs to the universal ribosomal protein uS11 family. In terms of assembly, part of the 30S ribosomal subunit. Interacts with proteins S7 and S18. Binds to IF-3.

In terms of biological role, located on the platform of the 30S subunit, it bridges several disparate RNA helices of the 16S rRNA. Forms part of the Shine-Dalgarno cleft in the 70S ribosome. The sequence is that of Small ribosomal subunit protein uS11 from Campylobacter hominis (strain ATCC BAA-381 / DSM 21671 / CCUG 45161 / LMG 19568 / NCTC 13146 / CH001A).